Consider the following 111-residue polypeptide: NADH-ubiquinone oxidoreductase chain 3 (111 aa).

Helical transmembrane passes span 2 to 22 (ILIW…GMFV), 54 to 74 (FFVI…LLPM), and 82 to 102 (PTTY…FYEW).

The protein belongs to the complex I subunit 3 family.

Its subcellular location is the mitochondrion membrane. The catalysed reaction is a ubiquinone + NADH + 5 H(+)(in) = a ubiquinol + NAD(+) + 4 H(+)(out). Functionally, core subunit of the mitochondrial membrane respiratory chain NADH dehydrogenase (Complex I) that is believed to belong to the minimal assembly required for catalysis. Complex I functions in the transfer of electrons from NADH to the respiratory chain. The immediate electron acceptor for the enzyme is believed to be ubiquinone. The chain is NADH-ubiquinone oxidoreductase chain 3 (ND3) from Artemia franciscana (Brine shrimp).